Here is a 376-residue protein sequence, read N- to C-terminus: MSPVQLAEKNYERDEQFTKALHGESYKKTGLSALIAKSKDAASVAAEGYFKHWDGGISKDDEEKRLNDYSQLTHHYYNLVTDFYEYGWGSSFHFSRYYKGEAFRQATARHEHFLAHKMNLNENMKVLDVGCGVGGPGREITRFTDCEIVGLNNNDYQIERANHYAKKYHLDHKLSYVKGDFMQMDFEPESFDAVYAIEATVHAPVLEGVYSEIYKVLKPGGVFGVYEWVMTDKYDETNEEHRKIAYGIEVGDGIPKMYSRKVAEQALKNVGFEIEYQKDLADVDDEIPWYYPLSGDLKFCQTFGDYLTVFRTSRIGRFITTESVGLMEKIGLAPKGSKQVTHALEDAAVNLVEGGRQKLFTPMMLYVVRKPLEKKD.

It belongs to the class I-like SAM-binding methyltransferase superfamily. Erg6/SMT family.

The catalysed reaction is zymosterol + S-adenosyl-L-methionine = fecosterol + S-adenosyl-L-homocysteine + H(+). The protein operates within steroid metabolism; ergosterol biosynthesis; ergosterol from zymosterol: step 1/5. With respect to regulation, substrate analogs 25-azalanosterol and 24(R,S),25-epiminolanosterol act as inhibitors. In terms of biological role, sterol 24-C-methyltransferase; part of the third module of ergosterol biosynthesis pathway that includes the late steps of the pathway. ERG6 catalyzes the methyl transfer from S-adenosyl-methionine to the C-24 of zymosterol to form fecosterol. The third module or late pathway involves the ergosterol synthesis itself through consecutive reactions that mainly occur in the endoplasmic reticulum (ER) membrane. Firstly, the squalene synthase ERG9 catalyzes the condensation of 2 farnesyl pyrophosphate moieties to form squalene, which is the precursor of all steroids. Squalene synthase is crucial for balancing the incorporation of farnesyl diphosphate (FPP) into sterol and nonsterol isoprene synthesis. Secondly, the squalene epoxidase ERG1 catalyzes the stereospecific oxidation of squalene to (S)-2,3-epoxysqualene, which is considered to be a rate-limiting enzyme in steroid biosynthesis. Then, the lanosterol synthase ERG7 catalyzes the cyclization of (S)-2,3 oxidosqualene to lanosterol, a reaction that forms the sterol core. In the next steps, lanosterol is transformed to zymosterol through a complex process involving various demethylation, reduction and desaturation reactions. The lanosterol 14-alpha-demethylase ERG11 (also known as CYP51) catalyzes C14-demethylation of lanosterol to produce 4,4'-dimethyl cholesta-8,14,24-triene-3-beta-ol, which is critical for ergosterol biosynthesis. The C-14 reductase ERG24 reduces the C14=C15 double bond of 4,4-dimethyl-cholesta-8,14,24-trienol to produce 4,4-dimethyl-cholesta-8,24-dienol. 4,4-dimethyl-cholesta-8,24-dienol is substrate of the C-4 demethylation complex ERG25-ERG26-ERG27 in which ERG25 catalyzes the three-step monooxygenation required for the demethylation of 4,4-dimethyl and 4alpha-methylsterols, ERG26 catalyzes the oxidative decarboxylation that results in a reduction of the 3-beta-hydroxy group at the C-3 carbon to an oxo group, and ERG27 is responsible for the reduction of the keto group on the C-3. ERG28 has a role as a scaffold to help anchor ERG25, ERG26 and ERG27 to the endoplasmic reticulum and ERG29 regulates the activity of the iron-containing C4-methylsterol oxidase ERG25. Then, the sterol 24-C-methyltransferase ERG6 catalyzes the methyl transfer from S-adenosyl-methionine to the C-24 of zymosterol to form fecosterol. The C-8 sterol isomerase ERG2 catalyzes the reaction which results in unsaturation at C-7 in the B ring of sterols and thus converts fecosterol to episterol. The sterol-C5-desaturase ERG3 then catalyzes the introduction of a C-5 double bond in the B ring to produce 5-dehydroepisterol. The C-22 sterol desaturase ERG5 further converts 5-dehydroepisterol into ergosta-5,7,22,24(28)-tetraen-3beta-ol by forming the C-22(23) double bond in the sterol side chain. Finally, ergosta-5,7,22,24(28)-tetraen-3beta-ol is substrate of the C-24(28) sterol reductase ERG4 to produce ergosterol. The sequence is that of Sterol 24-C-methyltransferase from Candida albicans (strain SC5314 / ATCC MYA-2876) (Yeast).